A 381-amino-acid polypeptide reads, in one-letter code: MTTLDQFATDKLARLEAGALRRRLRPTARAPGAVLERDGQRLISFSCNDYLNLSTHPAVIDAAIDAARRHGAGAGASRLVTGDHPLYCALEARLAALKQTEDAVVFGSGFLANTGIIPALMAREDAIFVDELAHACIWAGARLSGAALHVFRHNDLAHLAELLAAHRQAARHAMVVTDGVFSMDGDLAPVGEMLALAKAHDAWLMTDDAHGIGVINEGRGSAHGHDVPLQMGTLSKAVGSYGGYLCASHVVCELIRNRARSFVYTTGLPPAVVGASIAALDLIATDPAMCAAPLAHARRFCAALGLPPAESPIVPLLLGTAERALAAQAVLEAAGFLVAAIRPPTVPEGTARLRFAFTACHAPDDIDRLAQLVHDRILVTA.

Arg22 contacts substrate. 109–110 provides a ligand contact to pyridoxal 5'-phosphate; it reads GF. His134 provides a ligand contact to substrate. Pyridoxal 5'-phosphate is bound by residues Ser182, 207–210, and 233–236; these read DDAH and TLSK. An N6-(pyridoxal phosphate)lysine modification is found at Lys236. Residue Thr345 participates in substrate binding.

Belongs to the class-II pyridoxal-phosphate-dependent aminotransferase family. BioF subfamily. As to quaternary structure, homodimer. Pyridoxal 5'-phosphate is required as a cofactor.

The catalysed reaction is 6-carboxyhexanoyl-[ACP] + L-alanine + H(+) = (8S)-8-amino-7-oxononanoate + holo-[ACP] + CO2. It functions in the pathway cofactor biosynthesis; biotin biosynthesis. Functionally, catalyzes the decarboxylative condensation of pimeloyl-[acyl-carrier protein] and L-alanine to produce 8-amino-7-oxononanoate (AON), [acyl-carrier protein], and carbon dioxide. The sequence is that of Putative 8-amino-7-oxononanoate synthase (bioF) from Acidiphilium cryptum (strain JF-5).